The primary structure comprises 487 residues: Phenylalanine--tRNA ligase alpha subunit (487 aa).

Residues Thr319, Gln361–Glu363, and Tyr401 contribute to the L-phenylalanine site. Glu403 lines the Mg(2+) pocket. Phe427 contributes to the L-phenylalanine binding site.

This sequence belongs to the class-II aminoacyl-tRNA synthetase family. Phe-tRNA synthetase alpha subunit type 2 subfamily. In terms of assembly, tetramer of two alpha and two beta subunits. It depends on Mg(2+) as a cofactor.

It is found in the cytoplasm. The enzyme catalyses tRNA(Phe) + L-phenylalanine + ATP = L-phenylalanyl-tRNA(Phe) + AMP + diphosphate + H(+). In Dictyostelium discoideum (Social amoeba), this protein is Phenylalanine--tRNA ligase alpha subunit (phesA).